A 383-amino-acid chain; its full sequence is Putative glutamate--cysteine ligase 2-2 (383 aa).

This sequence belongs to the glutamate--cysteine ligase type 2 family. YbdK subfamily.

The catalysed reaction is L-cysteine + L-glutamate + ATP = gamma-L-glutamyl-L-cysteine + ADP + phosphate + H(+). Its function is as follows. ATP-dependent carboxylate-amine ligase which exhibits weak glutamate--cysteine ligase activity. In Legionella pneumophila (strain Lens), this protein is Putative glutamate--cysteine ligase 2-2.